A 691-amino-acid chain; its full sequence is Elongation factor G (691 aa).

The tr-type G domain maps to 8–283; that stretch reads EDYRNFGIMA…AVVDYLPTPI (276 aa). Residues 17–24, 81–85, and 135–138 contribute to the GTP site; these read AHIDAGKT, DTPGH, and NKMD.

Belongs to the TRAFAC class translation factor GTPase superfamily. Classic translation factor GTPase family. EF-G/EF-2 subfamily.

The protein resides in the cytoplasm. Its function is as follows. Catalyzes the GTP-dependent ribosomal translocation step during translation elongation. During this step, the ribosome changes from the pre-translocational (PRE) to the post-translocational (POST) state as the newly formed A-site-bound peptidyl-tRNA and P-site-bound deacylated tRNA move to the P and E sites, respectively. Catalyzes the coordinated movement of the two tRNA molecules, the mRNA and conformational changes in the ribosome. This Beijerinckia indica subsp. indica (strain ATCC 9039 / DSM 1715 / NCIMB 8712) protein is Elongation factor G.